The following is a 175-amino-acid chain: Ribosome-binding factor A (175 aa).

The interval 125–175 is disordered; sequence TAKHAGEADPYKSDAPEDVDIDEDDFDEEDIDLAGDDDIDEDANKDADSSK. Positions 128–139 are enriched in basic and acidic residues; sequence HAGEADPYKSDA. The span at 140 to 165 shows a compositional bias: acidic residues; sequence PEDVDIDEDDFDEEDIDLAGDDDIDE. Residues 166-175 are compositionally biased toward basic and acidic residues; sequence DANKDADSSK.

The protein belongs to the RbfA family. Monomer. Binds 30S ribosomal subunits, but not 50S ribosomal subunits or 70S ribosomes.

Its subcellular location is the cytoplasm. One of several proteins that assist in the late maturation steps of the functional core of the 30S ribosomal subunit. Associates with free 30S ribosomal subunits (but not with 30S subunits that are part of 70S ribosomes or polysomes). Required for efficient processing of 16S rRNA. May interact with the 5'-terminal helix region of 16S rRNA. This is Ribosome-binding factor A from Pseudarthrobacter chlorophenolicus (strain ATCC 700700 / DSM 12829 / CIP 107037 / JCM 12360 / KCTC 9906 / NCIMB 13794 / A6) (Arthrobacter chlorophenolicus).